The chain runs to 161 residues: Nucleotide-binding protein Ajs_2750 (161 aa).

Belongs to the YajQ family.

Functionally, nucleotide-binding protein. This Acidovorax sp. (strain JS42) protein is Nucleotide-binding protein Ajs_2750.